We begin with the raw amino-acid sequence, 605 residues long: MDQHKGDASLGGIVKALGLVFGDIGTSPIYTLTVIFTLTQPTRENVFGILSLVFWTMTILVTMEYAWLAMSLGRKGQGGEIVLREIIMKLVKTGRLVAFAGFLSFVGVSLLLGDGVITPAISILSAVEGLLLIPGLEGLSTGTLVAIAAAIAIGLFSVQFKGTDRVAGAFGPIMAVWFSTLAVTGVVSALSMPEIVEAINPWHAFTFFRENGLAGYFVLSEVILCSTGGEALYADMGHLGRRPIVKSWYFVFMALYLNYLGQGVFAITHPEAKNLLFGMVRDQMPTLYIPFLILTIMATIIASQSIISGVFSIVYQGITTRLLPLMRVDYTSREIKSQIYLGAVNWSLMVAVILVMLLFRKSENLAAAYGMAVTGSMTITGIMMIIVFAHTTKKWRALVALVITLIDAAYLLSTFSKIPHGAYWSLILASIPFVTIIIWTRGQRSLYHALKPLDLETFLISYEQIYAKGPIRGTGLFFTRDTDVVPPYVVHCIIRSNIIYERNVFISLVITDEPLGVETELIKGIGPGLDAFRIEAGYMEVVDIEALLKANGIQEKVIFYGVEDISTRNPLWRVFSVFKKLTPNFVQFHKLPASRLQGVVTRVEM.

The next 12 membrane-spanning stretches (helical) occupy residues 16–36, 46–66, 97–117, 138–158, 166–186, 212–232, 248–268, 287–307, 339–359, 368–388, 397–417, and 418–438; these read ALGL…TVIF, VFGI…MEYA, VAFA…DGVI, GLST…LFSV, VAGA…VTGV, GLAG…GEAL, WYFV…FAIT, LYIP…QSII, IYLG…MLLF, AYGM…IIVF, ALVA…TFSK, and IPHG…TIII.

This sequence belongs to the HAK/KUP transporter (TC 2.A.72) family.

It localises to the cell inner membrane. The catalysed reaction is K(+)(in) + H(+)(in) = K(+)(out) + H(+)(out). In terms of biological role, transport of potassium into the cell. Likely operates as a K(+):H(+) symporter. This is Probable potassium transport system protein Kup 1 from Geobacter metallireducens (strain ATCC 53774 / DSM 7210 / GS-15).